Reading from the N-terminus, the 59-residue chain is Large ribosomal subunit protein bL32 (59 aa).

The interval 1-59 (MAVQQNRKTRSKRGMRRSHDALSAAALSTDATTGEVHRRHHVSPDGFYRGKQVVEARDE) is disordered. Residues 7–16 (RKTRSKRGMR) are compositionally biased toward basic residues. The segment covering 21–33 (ALSAAALSTDATT) has biased composition (low complexity).

Belongs to the bacterial ribosomal protein bL32 family.

The sequence is that of Large ribosomal subunit protein bL32 from Marinobacter nauticus (strain ATCC 700491 / DSM 11845 / VT8) (Marinobacter aquaeolei).